The following is a 104-amino-acid chain: Signal recognition particle 19 kDa protein (104 aa).

It belongs to the SRP19 family. Part of the signal recognition particle protein translocation system, which is composed of SRP and FtsY. Archaeal SRP consists of a 7S RNA molecule of 300 nucleotides and two protein subunits: SRP54 and SRP19.

The protein localises to the cytoplasm. Its function is as follows. Involved in targeting and insertion of nascent membrane proteins into the cytoplasmic membrane. Binds directly to 7S RNA and mediates binding of the 54 kDa subunit of the SRP. This chain is Signal recognition particle 19 kDa protein, found in Archaeoglobus fulgidus (strain ATCC 49558 / DSM 4304 / JCM 9628 / NBRC 100126 / VC-16).